The sequence spans 363 residues: Isopentenyl-diphosphate delta-isomerase (363 aa).

A substrate-binding site is contributed by 7–8; it reads RK. FMN contacts are provided by residues 71–73, serine 101, and asparagine 130; that span reads AMT. A substrate-binding site is contributed by glutamine 160. Glutamate 161 is a Mg(2+) binding site. Residues lysine 192, serine 217, threonine 222, 270–272, and 291–292 each bind FMN; these read GIR and AG.

Belongs to the IPP isomerase type 2 family. Homooctamer. Dimer of tetramers. Requires FMN as cofactor. The cofactor is NADPH. Mg(2+) is required as a cofactor.

It localises to the cytoplasm. The enzyme catalyses isopentenyl diphosphate = dimethylallyl diphosphate. Functionally, involved in the biosynthesis of isoprenoids. Catalyzes the 1,3-allylic rearrangement of the homoallylic substrate isopentenyl (IPP) to its allylic isomer, dimethylallyl diphosphate (DMAPP). The protein is Isopentenyl-diphosphate delta-isomerase of Symbiobacterium thermophilum (strain DSM 24528 / JCM 14929 / IAM 14863 / T).